A 453-amino-acid chain; its full sequence is Ubiquitin-associated protein 1 (453 aa).

Residues 19-65 (LDDVPFKLNEKFRCPSKVGLPIGFCLSDCNAILSDLQYDFNLERRTV) enclose the UMA domain. Basic and acidic residues predominate over residues 83 to 93 (EAIRTDSESER). Disordered stretches follow at residues 83 to 119 (EAIRTDSESERQAASQDAEVGLVGGKKARPSDEQDIV), 189 to 223 (LQSQPQSSVSPPQLPPAEHRPVSPSTTPPLQAKTG), and 260 to 335 (FPKL…AGTT). Over residues 189 to 199 (LQSQPQSSVSP) the composition is skewed to low complexity. A compositionally biased stretch (polar residues) spans 285–328 (NLSNGTPPSLQRTASNNNTTLPQEQPVFAQNGTPKQSNPVTVTS). UBA domains are found at residues 340-381 (SPSE…LFTH) and 403-449 (GSEE…LMTR).

Component of an ESCRT-I complex (endosomal sorting complex required for transport I).

It localises to the cytoplasm. Its subcellular location is the cytosol. The protein localises to the endosome. Functionally, component of the ESCRT-I complex, a regulator of vesicular trafficking process. Binds to ubiquitinated cargo proteins and is required for the sorting of endocytic ubiquitinated cargos into multivesicular bodies (MVBs). The protein is Ubiquitin-associated protein 1 of Danio rerio (Zebrafish).